Consider the following 424-residue polypeptide: UPF0229 protein PC1_1960 (424 aa).

The disordered stretch occupies residues 46–109 (IESGESVSIP…GQGDASKDGE (64 aa)). Over residues 77-90 (PGNDHFVQNDKIER) the composition is skewed to basic and acidic residues. Residues 92–101 (QGGGGGGSGQ) are compositionally biased toward gly residues.

The protein belongs to the UPF0229 family.

This is UPF0229 protein PC1_1960 from Pectobacterium carotovorum subsp. carotovorum (strain PC1).